Reading from the N-terminus, the 1257-residue chain is MGRKEKMAEKCRKLMTEPGKIRNIGIIAHIDHGKCVAPETKICLADGRFVRADELFEELKERGRLVKCDESEEVYELREPVGVSSLDKDAVEIVEGKITHVWRLKADKLVEVEVKNGRSIRTTPEHKFLVLDPSGEIVEKRADELEIGDYIVCTQKLVHEGMSEEELKREVFRRLGRDFFVHLPEEEAESVLELAKERGIKALWETLEVDIEENSFYYQLRKGRIRADILVDLAEELGLDLADLYDAVEVSYRSNTKSTKPIRLPEPEDLFYLAGLMFGDGCWNQLTNGSEAIQGEVKRIASDMGLEVRVRRYEGKTARIDFPETVPRILEALFDYPRRKKAHRIRVNDFLTRAPLDCIAEFIRGYFDADGTVEEGRSAVSVTSVSREFLEDLQLLLQKFDVASYLREGDGAYTLYVSGARSLERFPGFREPEKAEKLKKLMEKASSSELEKVPISGEILREVRGDVPTTRMFNCYSNYEGGQVGLTKSSLEKVISTLEAVGVEGEALERLKALARDDVCFLEVVRVEEVEYDGYVYDFTVEEHHNFAAEGFVVHNTTLSDQLLAGAGMISEELAGDQLVLDFDEMEQERGITIDAANVSMVHEYEGEEYLINLIDTPGHVDFSGDVTRAMRAVDGAIVVVCAVEGVMPQTETVLRQALRERVRPVLYINKVDRLINELKLSPEEMQNRFLEIISEVNKMIEQMAPEEFKDEWKVSVEDGSVAFGSAYYGWGISFPFMEKTGITFKDIIEYCQQDKQKELAQEAPVYQVVLDMVVKHLPDPVTAQEYRIEQIWPGDPESEDGKTLRKCDPNGKLAMVVTDVRIDEHAGEVATGRVYSGTIREGQQVYLASSKKETRVQQVGIYMGPDRIRTDEVPAGNIAAVTGLRDVWAGETVTDPEDPIEPFEELQHFAEPVVTVAVEAKNTQDLPKLIEILHQIAKEDPTVKVEINEETGQHLVSGMGELHLEIIAHRIKERGVDIKVSEPIVVYREGVFGVCDDEVEGKSPNKHNKFYVTVEPVEEEIVEAIEEGKFNPEEMSKKELEETLMEYGMDRDDAKAVETVKGTNFFLDKTVGLQYLNEVMELLIEGFEEAMEEGPLAKEPCRGVKVSLVDAEIHEDPVHRGPAQVIPAIKRAIYGGMLLADTHLLEPMQYIYVTVPQDYMGAVTKEIQGRRGTIEEIQQEGDTVIIKGKAPVAEMFGFANDIRSATEGRAIWTTEHAGYERVPEELEEQIIREIRERKGLKPEPPKPEDYIEDYGG.

Residues 273–402 (LAGLMFGDGC…LQLLLQKFDV (130 aa)) enclose the DOD-type homing endonuclease domain. The 242-residue stretch at 541 to 782 (VEEHHNFAAE…MVVKHLPDPV (242 aa)) folds into the tr-type G domain. GTP contacts are provided by residues 616–620 (DTPGH) and 670–673 (NKVD). The residue at position 1120 (histidine 1120) is a Diphthamide. The span at 1237 to 1250 (ERKGLKPEPPKPED) shows a compositional bias: basic and acidic residues. The segment at 1237-1257 (ERKGLKPEPPKPEDYIEDYGG) is disordered.

Belongs to the TRAFAC class translation factor GTPase superfamily. Classic translation factor GTPase family. EF-G/EF-2 subfamily. This protein undergoes a protein self splicing that involves a post-translational excision of the intervening region (intein) followed by peptide ligation.

It is found in the cytoplasm. Functionally, catalyzes the GTP-dependent ribosomal translocation step during translation elongation. During this step, the ribosome changes from the pre-translocational (PRE) to the post-translocational (POST) state as the newly formed A-site-bound peptidyl-tRNA and P-site-bound deacylated tRNA move to the P and E sites, respectively. Catalyzes the coordinated movement of the two tRNA molecules, the mRNA and conformational changes in the ribosome. The chain is Elongation factor 2 from Methanopyrus kandleri (strain AV19 / DSM 6324 / JCM 9639 / NBRC 100938).